The sequence spans 347 residues: High mobility group protein 20A (347 aa).

Composition is skewed to polar residues over residues 1–10 and 40–49; these read MENLMTSSTL and SGATSSTNNP. 2 disordered regions span residues 1–113 and 179–211; these read MENL…YVRF and FSRK…TEVK. Low complexity predominate over residues 55 to 66; sequence LSQGQLLQSESS. Positions 72-82 are enriched in basic and acidic residues; the sequence is NEQRHEDEQRS. A compositionally biased stretch (basic residues) spans 83-96; sequence KRGGWSKGRKRKKP. The segment at residues 103–171 is a DNA-binding region (HMG box); sequence PKSPLTGYVR…RYMKELEQYQ (69 aa). Ser105 is modified (phosphoserine). Basic and acidic residues predominate over residues 182–211; that stretch reads KTQDRQKGKSHRQDAARQATHDHEKETEVK. Residues 229–273 are a coiled coil; that stretch reads SKAREAELRQLRKSNMEFEERNAALQKHVESMRTAVEKLEVDVIQ.

Interacts with DTNB. As to expression, ubiquitous.

Its subcellular location is the nucleus. Plays a role in neuronal differentiation as chromatin-associated protein. Acts as inhibitor of HMG20B. Overcomes the repressive effects of the neuronal silencer REST and induces the activation of neuronal-specific genes. Involved in the recruitment of the histone methyltransferase KMT2A/MLL1 and consequent increased methylation of histone H3 lysine 4. This chain is High mobility group protein 20A (HMG20A), found in Homo sapiens (Human).